We begin with the raw amino-acid sequence, 93 residues long: UPF0223 protein gbs1030 (93 aa).

The protein belongs to the UPF0223 family.

The chain is UPF0223 protein gbs1030 from Streptococcus agalactiae serotype III (strain NEM316).